Reading from the N-terminus, the 487-residue chain is Glutamyl-tRNA(Gln) amidotransferase subunit A (487 aa).

Catalysis depends on charge relay system residues Lys-79 and Ser-158. Ser-182 serves as the catalytic Acyl-ester intermediate.

It belongs to the amidase family. GatA subfamily. In terms of assembly, heterotrimer of A, B and C subunits.

It catalyses the reaction L-glutamyl-tRNA(Gln) + L-glutamine + ATP + H2O = L-glutaminyl-tRNA(Gln) + L-glutamate + ADP + phosphate + H(+). In terms of biological role, allows the formation of correctly charged Gln-tRNA(Gln) through the transamidation of misacylated Glu-tRNA(Gln) in organisms which lack glutaminyl-tRNA synthetase. The reaction takes place in the presence of glutamine and ATP through an activated gamma-phospho-Glu-tRNA(Gln). The sequence is that of Glutamyl-tRNA(Gln) amidotransferase subunit A from Ehrlichia canis (strain Jake).